Consider the following 137-residue polypeptide: Protein cornichon homolog 4 (137 aa).

The next 3 membrane-spanning stretches (helical) occupy residues 8–28 (LISF…LVCL), 53–73 (FIVQ…FMTL), and 113–133 (LAYI…SALD).

It belongs to the cornichon family.

The protein resides in the membrane. This chain is Protein cornichon homolog 4, found in Arabidopsis thaliana (Mouse-ear cress).